Consider the following 618-residue polypeptide: Phosphoenolpyruvate carboxykinase [GTP] (618 aa).

Substrate is bound by residues Arg-83 and Tyr-217 to Gly-219. Mn(2+) contacts are provided by Lys-226 and His-245. Ser-267 serves as a coordination point for substrate. GTP is bound at residue Met-268–Ser-273. The active site involves Cys-269. Position 286 (Asp-286) interacts with Mn(2+). Asn-381–Arg-383 contacts substrate. GTP contacts are provided by Arg-383 and Arg-415.

This sequence belongs to the phosphoenolpyruvate carboxykinase [GTP] family. Mn(2+) serves as cofactor.

The protein localises to the cytoplasm. The enzyme catalyses oxaloacetate + GTP = phosphoenolpyruvate + GDP + CO2. It functions in the pathway carbohydrate biosynthesis; gluconeogenesis. Catalyzes the conversion of oxaloacetate (OAA) to phosphoenolpyruvate (PEP), the rate-limiting step in the metabolic pathway that produces glucose from lactate and other precursors derived from the citric acid cycle. In Pyrococcus abyssi (strain GE5 / Orsay), this protein is Phosphoenolpyruvate carboxykinase [GTP].